The chain runs to 820 residues: Trimethylamine-N-oxide reductase (820 aa).

Residues M1–A33 constitute a signal peptide (tat-type signal). S179 lines the Mo-bis(molybdopterin guanine dinucleotide) pocket.

The protein belongs to the prokaryotic molybdopterin-containing oxidoreductase family. Mo-bis(molybdopterin guanine dinucleotide) is required as a cofactor. In terms of processing, predicted to be exported by the Tat system. The position of the signal peptide cleavage has not been experimentally proven.

Its subcellular location is the periplasm. It carries out the reaction trimethylamine + 2 Fe(III)-[cytochrome c] + H2O = trimethylamine N-oxide + 2 Fe(II)-[cytochrome c] + 3 H(+). Reduces trimethylamine-N-oxide (TMAO) into trimethylamine; an anaerobic reaction coupled to energy-yielding reactions. This Vibrio parahaemolyticus serotype O3:K6 (strain RIMD 2210633) protein is Trimethylamine-N-oxide reductase (torA).